A 564-amino-acid polypeptide reads, in one-letter code: Hsp70-Hsp90 organising protein (564 aa).

TPR repeat units follow at residues 7–40, 42–74, and 76–108; these read AQRL…DPLD, VLYS…KKDW, and KGYI…DPNN. Residues 197-239 adopt a coiled-coil conformation; the sequence is EGNDAEERQRQQREEEERRKKKEEEERKKKEEEEMKKQNRTPE. The disordered stretch occupies residues 199–247; the sequence is NDAEERQRQQREEEERRKKKEEEERKKKEEEEMKKQNRTPEQIQGDEHK. A compositionally biased stretch (basic and acidic residues) spans 201–233; the sequence is AEERQRQQREEEERRKKKEEEERKKKEEEEMKK. 6 TPR repeats span residues 243-276, 278-310, 318-351, 378-411, 413-445, and 446-479; these read GDEH…NPND, MYHY…RYNF, AKLY…DNNR, AEEH…NPND, KLYS…DPTF, and VKAY…DPNN. The 40-residue stretch at 513–552 folds into the STI1 domain; sequence DPEIQQIISDPQFQIILQKLNENPNSISEYIKDPKIFNGL.

As to quaternary structure, monomer. Homodimer. Forms a complex composed of HOP and chaperones HSP70 and HSP90; the interaction is stronger in the absence of ATP. Interacts (via TPR 1, 2, 3, 7, 8 and 9 repeats) with HSP70 (via C-terminus); the interaction is direct and is stronger in the absence of ATP. Interacts (via TPR 4, 5 and 6 repeats) with HSP90 (via C-terminus); the interaction is direct.

It localises to the cytoplasm. In terms of biological role, acts as a co-chaperone and mediates the association of the chaperones HSP70 and HSP90 probably facilitating substrate transfer from HSP70 to HSP90. Stimulates HSP70 ATPase activity and, in contrast, inhibits HSP90 ATPase activity. The protein is Hsp70-Hsp90 organising protein of Plasmodium falciparum (isolate 3D7).